The primary structure comprises 375 residues: Chaperone protein DnaJ (375 aa).

The J domain maps to 5–70 (DYYEVLEISR…QKRQAYDRFG (66 aa)). Residues 133-211 (GKEVTIQIPS…CHGHGRVRRN (79 aa)) form a CR-type zinc finger. Zn(2+) contacts are provided by Cys-146, Cys-149, Cys-163, Cys-166, Cys-185, Cys-188, Cys-199, and Cys-202. CXXCXGXG motif repeat units lie at residues 146–153 (CEVCRGSG), 163–170 (CATCGGRG), 185–192 (CPQCNGSG), and 199–206 (CTNCHGHG).

The protein belongs to the DnaJ family. Homodimer. Zn(2+) is required as a cofactor.

The protein resides in the cytoplasm. Functionally, participates actively in the response to hyperosmotic and heat shock by preventing the aggregation of stress-denatured proteins and by disaggregating proteins, also in an autonomous, DnaK-independent fashion. Unfolded proteins bind initially to DnaJ; upon interaction with the DnaJ-bound protein, DnaK hydrolyzes its bound ATP, resulting in the formation of a stable complex. GrpE releases ADP from DnaK; ATP binding to DnaK triggers the release of the substrate protein, thus completing the reaction cycle. Several rounds of ATP-dependent interactions between DnaJ, DnaK and GrpE are required for fully efficient folding. Also involved, together with DnaK and GrpE, in the DNA replication of plasmids through activation of initiation proteins. This Acidithiobacillus ferrooxidans (strain ATCC 23270 / DSM 14882 / CIP 104768 / NCIMB 8455) (Ferrobacillus ferrooxidans (strain ATCC 23270)) protein is Chaperone protein DnaJ.